The sequence spans 417 residues: NADH-quinone oxidoreductase subunit D (417 aa).

Belongs to the complex I 49 kDa subunit family. NDH-1 is composed of 14 different subunits. Subunits NuoB, C, D, E, F, and G constitute the peripheral sector of the complex.

It localises to the cell membrane. It catalyses the reaction a quinone + NADH + 5 H(+)(in) = a quinol + NAD(+) + 4 H(+)(out). Its function is as follows. NDH-1 shuttles electrons from NADH, via FMN and iron-sulfur (Fe-S) centers, to quinones in the respiratory chain. The immediate electron acceptor for the enzyme in this species is believed to be ubiquinone. Couples the redox reaction to proton translocation (for every two electrons transferred, four hydrogen ions are translocated across the cytoplasmic membrane), and thus conserves the redox energy in a proton gradient. This Polynucleobacter asymbioticus (strain DSM 18221 / CIP 109841 / QLW-P1DMWA-1) (Polynucleobacter necessarius subsp. asymbioticus) protein is NADH-quinone oxidoreductase subunit D.